The chain runs to 285 residues: uncharacterized protein (285 aa).

7 helical membrane passes run 6–26, 38–58, 84–104, 110–130, 153–173, 176–196, and 236–256; these read YLVV…TPLI, VFAA…YIFP, IFLL…IFLR, GVLA…ELIF, FMMH…DDGF, ISFF…ALMV, and LIFG…TVLV.

It is found in the cell membrane. This is an uncharacterized protein from Mycoplasma pneumoniae (strain ATCC 29342 / M129 / Subtype 1) (Mycoplasmoides pneumoniae).